A 451-amino-acid polypeptide reads, in one-letter code: Chromosomal replication initiator protein DnaA (451 aa).

Positions 1–72 (MQSIEDIWQE…ANILQEITGR (72 aa)) are domain I, interacts with DnaA modulators. Residues 72-108 (RLFDVRFIDGEQEENFEYTVIKPNPALDEDGIEIGKH) form a domain II region. Residues 109–325 (MLNPRYVFDT…GALIRVVAYS (217 aa)) are domain III, AAA+ region. 4 residues coordinate ATP: glycine 153, glycine 155, lysine 156, and threonine 157. The tract at residues 326 to 451 (SLVNKDITAG…KNLRKAQNMF (126 aa)) is domain IV, binds dsDNA.

It belongs to the DnaA family. Oligomerizes as a right-handed, spiral filament on DNA at oriC.

It is found in the cytoplasm. Functionally, plays an essential role in the initiation and regulation of chromosomal replication. ATP-DnaA binds to the origin of replication (oriC) to initiate formation of the DNA replication initiation complex once per cell cycle. Binds the DnaA box (a 9 base pair repeat at the origin) and separates the double-stranded (ds)DNA. Forms a right-handed helical filament on oriC DNA; dsDNA binds to the exterior of the filament while single-stranded (ss)DNA is stabiized in the filament's interior. The ATP-DnaA-oriC complex binds and stabilizes one strand of the AT-rich DNA unwinding element (DUE), permitting loading of DNA polymerase. After initiation quickly degrades to an ADP-DnaA complex that is not apt for DNA replication. Binds acidic phospholipids. This is Chromosomal replication initiator protein DnaA from Listeria monocytogenes serotype 4b (strain F2365).